A 401-amino-acid chain; its full sequence is Dual-specificity RNA methyltransferase RlmN (401 aa).

E114 serves as the catalytic Proton acceptor. The 246-residue stretch at 120 to 365 (DKGRGTLCVS…TMVRRTRGDD (246 aa)) folds into the Radical SAM core domain. The cysteines at positions 127 and 370 are disulfide-linked. [4Fe-4S] cluster contacts are provided by C134, C138, and C141. S-adenosyl-L-methionine contacts are provided by residues 187-188 (GE), S219, 241-243 (SLH), and N327. Catalysis depends on C370, which acts as the S-methylcysteine intermediate.

This sequence belongs to the radical SAM superfamily. RlmN family. It depends on [4Fe-4S] cluster as a cofactor.

The protein localises to the cytoplasm. It carries out the reaction adenosine(2503) in 23S rRNA + 2 reduced [2Fe-2S]-[ferredoxin] + 2 S-adenosyl-L-methionine = 2-methyladenosine(2503) in 23S rRNA + 5'-deoxyadenosine + L-methionine + 2 oxidized [2Fe-2S]-[ferredoxin] + S-adenosyl-L-homocysteine. The enzyme catalyses adenosine(37) in tRNA + 2 reduced [2Fe-2S]-[ferredoxin] + 2 S-adenosyl-L-methionine = 2-methyladenosine(37) in tRNA + 5'-deoxyadenosine + L-methionine + 2 oxidized [2Fe-2S]-[ferredoxin] + S-adenosyl-L-homocysteine. Its function is as follows. Specifically methylates position 2 of adenine 2503 in 23S rRNA and position 2 of adenine 37 in tRNAs. m2A2503 modification seems to play a crucial role in the proofreading step occurring at the peptidyl transferase center and thus would serve to optimize ribosomal fidelity. This Xanthomonas campestris pv. campestris (strain B100) protein is Dual-specificity RNA methyltransferase RlmN.